The chain runs to 131 residues: Sec-independent protein translocase protein TatB (131 aa).

A helical membrane pass occupies residues 2–22 (FANIGWWEMLVLVMVGLVVLG). The tract at residues 90–131 (DSLFTGDFDRPTPKKPDAAGSAGPDATEQIGAGPIPFDSDAT) is disordered. The segment covering 96–106 (DFDRPTPKKPD) has biased composition (basic and acidic residues).

The protein belongs to the TatB family. The Tat system comprises two distinct complexes: a TatABC complex, containing multiple copies of TatA, TatB and TatC subunits, and a separate TatA complex, containing only TatA subunits. Substrates initially bind to the TatABC complex, which probably triggers association of the separate TatA complex to form the active translocon.

The protein localises to the cell membrane. Functionally, part of the twin-arginine translocation (Tat) system that transports large folded proteins containing a characteristic twin-arginine motif in their signal peptide across membranes. Together with TatC, TatB is part of a receptor directly interacting with Tat signal peptides. TatB may form an oligomeric binding site that transiently accommodates folded Tat precursor proteins before their translocation. The chain is Sec-independent protein translocase protein TatB from Mycobacterium tuberculosis (strain ATCC 25177 / H37Ra).